A 621-amino-acid chain; its full sequence is E3 SUMO-protein ligase PIAS2 (621 aa).

In terms of domain architecture, SAP spans 11–45 (VSSFRVSELQVLLGFAGRNKSGRKHDLLMRALHLL). An LXXLL motif motif is present at residues 19–23 (LQVLL). Residues K46 and K249 each participate in a glycyl lysine isopeptide (Lys-Gly) (interchain with G-Cter in SUMO2) cross-link. In terms of domain architecture, PINIT spans 134–299 (QPSPPIPPVH…SMSVYLVRQL (166 aa)). The SP-RING-type zinc finger occupies 331–412 (PDSEIATTSL…FMEILNDCSD (82 aa)). Zn(2+) contacts are provided by C362, H364, C385, and C388. Residues K430, K435, K443, and K452 each participate in a glycyl lysine isopeptide (Lys-Gly) (interchain with G-Cter in SUMO2) cross-link. The tract at residues 467 to 473 (VDVIDLT) is SUMO1-binding. A phosphoserine mark is found at S476, S477, and S478. The Nuclear localization signal signature appears at 484-492 (PPAKRKCIF). K489 is covalently cross-linked (Glycyl lysine isopeptide (Lys-Gly) (interchain with G-Cter in SUMO2)). S499 is subject to Phosphoserine. Residues K502 and Q562 each participate in a glycyl lysine isopeptide (Lys-Gly) (interchain with G-Cter in SUMO2) cross-link. Low complexity predominate over residues 579–610 (SSTSVTTTSSHESSTHVSSSSSRSETGVITSS). Residues 579–621 (SSTSVTTTSSHESSTHVSSSSSRSETGVITSSGSNIPDIISLD) are disordered.

This sequence belongs to the PIAS family. Binds SUMO1 and UBE2I. Interacts with AXIN1, JUN, MDM2, PARK7, TP53 and TP73 isoform alpha, but not TP73 isoform beta. Interacts with STAT4 following IL12 and IFN-alpha stimulation of T-cells. Interacts also with GTF2I, GTF2IRD1, IKFZ1, DAB2 and MSX2, as well as with several steroid receptors, including ESR1, ESR2, NR3C1, PGR, AR, and with NCOA2. Sumoylation of a target protein seems to enhance the interaction. Binds to sumoylated ELK1. Binds DNA, such as CDKN1A promoter, in a sequence-specific manner. Interacts with PLAG1. Interacts with KLF8; the interaction results in SUMO ligation and repression of KLF8 transcriptional activity and of its cell cycle progression into G(1) phase. PIAS2-beta interacts with IFIH1/MDA5. Isoform PIAS2-alpha interacts with PML (isoform PML-12). Interacts with PRDM1/Blimp-1. Sumoylated. As to expression, mainly expressed in testis. Isoform 3 is expressed predominantly in adult testis, weakly in pancreas, embryonic testis and sperm, and at very low levels in other organs.

The protein resides in the nucleus speckle. The protein localises to the nucleus. Its subcellular location is the PML body. Its pathway is protein modification; protein sumoylation. In terms of biological role, functions as an E3-type small ubiquitin-like modifier (SUMO) ligase, stabilizing the interaction between UBE2I and the substrate, and as a SUMO-tethering factor. Plays a crucial role as a transcriptional coregulator in various cellular pathways, including the STAT pathway, the p53 pathway and the steroid hormone signaling pathway. The effects of this transcriptional coregulation, transactivation or silencing may vary depending upon the biological context and the PIAS2 isoform studied. However, it seems to be mostly involved in gene silencing. Binds to sumoylated ELK1 and enhances its transcriptional activity by preventing recruitment of HDAC2 by ELK1, thus reversing SUMO-mediated repression of ELK1 transactivation activity. Isoform PIAS2-beta, but not isoform PIAS2-alpha, promotes MDM2 sumoylation. Isoform PIAS2-alpha promotes PARK7 sumoylation. Isoform PIAS2-beta promotes NCOA2 sumoylation more efficiently than isoform PIAS2-alpha. Isoform PIAS2-alpha sumoylates PML at'Lys-65' and 'Lys-160'. This Homo sapiens (Human) protein is E3 SUMO-protein ligase PIAS2 (PIAS2).